A 110-amino-acid polypeptide reads, in one-letter code: Small ribosomal subunit protein uS17 (110 aa).

This sequence belongs to the universal ribosomal protein uS17 family. As to quaternary structure, part of the 30S ribosomal subunit.

In terms of biological role, one of the primary rRNA binding proteins, it binds specifically to the 5'-end of 16S ribosomal RNA. The protein is Small ribosomal subunit protein uS17 of Petrotoga mobilis (strain DSM 10674 / SJ95).